The chain runs to 443 residues: tRNA(Ile2) 2-agmatinylcytidine synthetase TiaS (443 aa).

This sequence belongs to the TiaS family.

The protein localises to the cytoplasm. It carries out the reaction cytidine(34) in tRNA(Ile2) + agmatine + ATP + H2O = 2-agmatinylcytidine(34) in tRNA(Ile2) + AMP + 2 phosphate + 2 H(+). In terms of biological role, ATP-dependent agmatine transferase that catalyzes the formation of 2-agmatinylcytidine (agm2C) at the wobble position (C34) of tRNA(Ile2), converting the codon specificity from AUG to AUA. The polypeptide is tRNA(Ile2) 2-agmatinylcytidine synthetase TiaS (Saccharolobus islandicus (strain L.S.2.15 / Lassen #1) (Sulfolobus islandicus)).